The primary structure comprises 391 residues: Arginine biosynthesis bifunctional protein ArgJ (391 aa).

Substrate-binding residues include T149, K172, T183, E263, N386, and S391. T183 acts as the Nucleophile in catalysis.

Belongs to the ArgJ family. Heterotetramer of two alpha and two beta chains.

The protein localises to the cytoplasm. The catalysed reaction is N(2)-acetyl-L-ornithine + L-glutamate = N-acetyl-L-glutamate + L-ornithine. It carries out the reaction L-glutamate + acetyl-CoA = N-acetyl-L-glutamate + CoA + H(+). It functions in the pathway amino-acid biosynthesis; L-arginine biosynthesis; L-ornithine and N-acetyl-L-glutamate from L-glutamate and N(2)-acetyl-L-ornithine (cyclic): step 1/1. The protein operates within amino-acid biosynthesis; L-arginine biosynthesis; N(2)-acetyl-L-ornithine from L-glutamate: step 1/4. In terms of biological role, catalyzes two activities which are involved in the cyclic version of arginine biosynthesis: the synthesis of N-acetylglutamate from glutamate and acetyl-CoA as the acetyl donor, and of ornithine by transacetylation between N(2)-acetylornithine and glutamate. This is Arginine biosynthesis bifunctional protein ArgJ from Bifidobacterium longum (strain NCC 2705).